Here is a 294-residue protein sequence, read N- to C-terminus: Tetraspanin-15 (294 aa).

Over 1 to 23 the chain is Cytoplasmic; sequence MPRGDSEQVRYCARFSYLWLKFS. A helical membrane pass occupies residues 24-44; that stretch reads LIIYSTVFWLIGGLVLSVGIY. The Extracellular portion of the chain corresponds to 45–62; that stretch reads AEAERQKYKTLESAFLAP. The helical transmembrane segment at 63 to 83 threads the bilayer; it reads AIILILLGVVMFIVSFIGVLA. Residues 84–94 are Cytoplasmic-facing; it reads SLRDNLCLLQS. Residues 95 to 115 form a helical membrane-spanning segment; sequence FMYILGICLVMELIGGIVALI. Residues 116-235 are Extracellular-facing; the sequence is FRNQTIDFLN…WFMDNYTIMA (120 aa). An N-linked (GlcNAc...) asparagine glycan is attached at Asn-118. Cystine bridges form between Cys-154–Cys-219, Cys-155–Cys-185, Cys-171–Cys-179, and Cys-186–Cys-198. N-linked (GlcNAc...) asparagine glycosylation is found at Asn-189 and Asn-230. A helical transmembrane segment spans residues 236 to 256; the sequence is GLLLGILLPQFLGVLLTLLYI. The Cytoplasmic segment spans residues 257 to 294; it reads TRVEDIILEHSVTDGLLGPGAKSRTDTAGTGCCLCYPD.

The protein belongs to the tetraspanin (TM4SF) family. In terms of assembly, interacts with ADAM10; the interaction influences ADAM10 substrate specificity, endocytosis and turnover. Palmitoylated.

The protein resides in the cell membrane. It is found in the late endosome membrane. Its function is as follows. Part of TspanC8 subgroup, composed of 6 members that interact with the transmembrane metalloprotease ADAM10. This interaction is required for ADAM10 exit from the endoplasmic reticulum and for enzymatic maturation and trafficking to the cell surface as well as substrate specificity. Different TspanC8/ADAM10 complexes have distinct substrates. Promotes ADAM10-mediated cleavage of CDH2. Negatively regulates ligand-induced Notch activity probably by regulating ADAM10 activity. The sequence is that of Tetraspanin-15 (Tspan15) from Mus musculus (Mouse).